Here is a 556-residue protein sequence, read N- to C-terminus: Formate--tetrahydrofolate ligase (556 aa).

65-72 contacts ATP; sequence TPAGEGKS.

Belongs to the formate--tetrahydrofolate ligase family.

The catalysed reaction is (6S)-5,6,7,8-tetrahydrofolate + formate + ATP = (6R)-10-formyltetrahydrofolate + ADP + phosphate. It functions in the pathway one-carbon metabolism; tetrahydrofolate interconversion. The chain is Formate--tetrahydrofolate ligase from Streptococcus pneumoniae (strain ATCC 700669 / Spain 23F-1).